Reading from the N-terminus, the 122-residue chain is Large ribosomal subunit protein uL14 (122 aa).

The protein belongs to the universal ribosomal protein uL14 family. As to quaternary structure, part of the 50S ribosomal subunit. Forms a cluster with proteins L3 and L19. In the 70S ribosome, L14 and L19 interact and together make contacts with the 16S rRNA in bridges B5 and B8.

Functionally, binds to 23S rRNA. Forms part of two intersubunit bridges in the 70S ribosome. The protein is Large ribosomal subunit protein uL14 of Clostridium botulinum (strain Alaska E43 / Type E3).